The primary structure comprises 337 residues: Ferredoxin--NADP reductase (337 aa).

FAD-binding residues include D35, Q43, Y48, V88, F123, D289, and T330.

It belongs to the ferredoxin--NADP reductase type 2 family. Homodimer. Requires FAD as cofactor.

The catalysed reaction is 2 reduced [2Fe-2S]-[ferredoxin] + NADP(+) + H(+) = 2 oxidized [2Fe-2S]-[ferredoxin] + NADPH. This chain is Ferredoxin--NADP reductase, found in Paramagnetospirillum magneticum (strain ATCC 700264 / AMB-1) (Magnetospirillum magneticum).